Consider the following 180-residue polypeptide: Signaling threshold-regulating transmembrane adapter 1 (180 aa).

Topologically, residues 1-24 are extracellular; that stretch reads MSRDYNCTTDDQLAWGIPSISHAW. N6 carries an N-linked (GlcNAc...) asparagine glycan. A helical; Signal-anchor for type III membrane protein membrane pass occupies residues 25–45; sequence GLWALLGVVTVLLLISLAALL. The Cytoplasmic portion of the chain corresponds to 46–180; it reads SQWTRGRRRN…AYANSQPAPS (135 aa). S63 and S66 each carry phosphoserine. Y73 carries the phosphotyrosine modification. The interaction with GRB2 stretch occupies residues 73–76; that stretch reads YGNL. The segment at 81 to 103 is disordered; sequence TGRLSQEPRSEEQDPPSSGGLAR. 2 positions are modified to phosphoserine: S85 and S90. Y111, Y132, and Y153 each carry phosphotyrosine. The interval 130–135 is interaction with PTPN11; the sequence is IKYCEV. Residues 153 to 156 form an interaction with CSK region; it reads YASV. Residue S166 is modified to Phosphoserine. Y172 is subject to Phosphotyrosine. Positions 172 to 175 are interaction with GRB2; sequence YANS.

Homodimer; disulfide-linked. When phosphorylated, interacts with PTPN11/SHP2, GRB2 and CSK. In terms of processing, phosphorylated on tyrosines upon TCR activation; which leads to the recruitment of PTPN11, GRB2 and CSK. Expressed in thymus and spleen, with highest levels in immature thymocytes (at protein level).

Its subcellular location is the cell membrane. Functionally, negatively regulates T-cell antigen receptor (TCR)-mediated signaling. Involved in positive selection of T-cells. The polypeptide is Signaling threshold-regulating transmembrane adapter 1 (Sit1) (Mus musculus (Mouse)).